Consider the following 282-residue polypeptide: MPELPEVEVVRRGLQDYIVGKTITAVRVHHPRAVRRHVAGPTDLTNRLLGTRINGIDRRGKYLWFLLDTDIALVVHLGMSGQMLLGTVPRVDHVRISALFDDGTVLNFTDQRTLGGWLLADLMTVDGSVLPVPVAHLARDPFDPRFDVEAVVKVLRCKHSELKRQLLDQQTVSGIGNIYADEALWRAEVHGARIAATLTRRQLAAVLDAAADVMRDSLAKGGTSFDSLYVNVNGESGYFDRSLDAYGREGEGCRRCGAVMHREKFMNRSSFYCPRCQPRPRR.

P2 acts as the Schiff-base intermediate with DNA in catalysis. E3 (proton donor) is an active-site residue. K61 functions as the Proton donor; for beta-elimination activity in the catalytic mechanism. Positions 93, 112, and 158 each coordinate DNA. The FPG-type zinc-finger motif lies at 244–278; that stretch reads DAYGREGEGCRRCGAVMHREKFMNRSSFYCPRCQP. The active-site Proton donor; for delta-elimination activity is the R268.

The protein belongs to the FPG family. As to quaternary structure, monomer. The cofactor is Zn(2+).

The catalysed reaction is Hydrolysis of DNA containing ring-opened 7-methylguanine residues, releasing 2,6-diamino-4-hydroxy-5-(N-methyl)formamidopyrimidine.. It carries out the reaction 2'-deoxyribonucleotide-(2'-deoxyribose 5'-phosphate)-2'-deoxyribonucleotide-DNA = a 3'-end 2'-deoxyribonucleotide-(2,3-dehydro-2,3-deoxyribose 5'-phosphate)-DNA + a 5'-end 5'-phospho-2'-deoxyribonucleoside-DNA + H(+). Its function is as follows. Involved in base excision repair of DNA damaged by oxidation or by mutagenic agents. Acts as a DNA glycosylase that recognizes and removes damaged bases. Has a preference for oxidized purines, such as 7,8-dihydro-8-oxoguanine (8-oxoG). Has AP (apurinic/apyrimidinic) lyase activity and introduces nicks in the DNA strand. Cleaves the DNA backbone by beta-delta elimination to generate a single-strand break at the site of the removed base with both 3'- and 5'-phosphates. In Mycobacterium leprae (strain Br4923), this protein is Formamidopyrimidine-DNA glycosylase.